A 258-amino-acid polypeptide reads, in one-letter code: uncharacterized protein (258 aa).

An N-terminal signal peptide occupies residues 1–19 (MVGILPLCCSGCVPSLCCS). Transmembrane regions (helical) follow at residues 94–114 (GLLL…NWTG), 197–217 (CLIL…LPYI), and 219–239 (PGLS…SSLV).

It localises to the membrane. This is an uncharacterized protein from Homo sapiens (Human).